We begin with the raw amino-acid sequence, 532 residues long: O-phosphoserine--tRNA(Cys) ligase (532 aa).

Substrate is bound by residues 188-190, 233-235, 275-276, and N327; these read HMT, SAS, and YY.

It belongs to the class-II aminoacyl-tRNA synthetase family. O-phosphoseryl-tRNA(Cys) synthetase subfamily. In terms of assembly, homotetramer. Interacts with SepCysS.

It catalyses the reaction tRNA(Cys) + O-phospho-L-serine + ATP = O-phospho-L-seryl-tRNA(Cys) + AMP + diphosphate. Its function is as follows. Catalyzes the attachment of O-phosphoserine (Sep) to tRNA(Cys). The chain is O-phosphoserine--tRNA(Cys) ligase from Methanocella arvoryzae (strain DSM 22066 / NBRC 105507 / MRE50).